Reading from the N-terminus, the 469-residue chain is Zinc transporter SLC39A7 (469 aa).

Residues 5–25 (LGAPHWVAVGLLTWAALGLLV) form a helical membrane-spanning segment. 2 stretches are compositionally biased toward basic and acidic residues: residues 43-56 (HGHS…DFHH) and 66-114 (HTHE…EHSH). Positions 43–122 (HGHSHRRSHE…SHGGYGESGA (80 aa)) are disordered. Residue histidine 66 is modified to Pros-methylhistidine. 3 consecutive transmembrane segments (helical) span residues 138 to 158 (ALGA…LIPV), 169 to 189 (LQIL…LHLI), and 214 to 234 (GPIL…LVVE). A compositionally biased stretch (basic residues) spans 242-255 (GGHGHSHGHGHTHG). The segment at 242–313 (GGHGHSHGHG…QNSEEEKTGS (72 aa)) is disordered. Residues 256–266 (HTQGSHGHGTQ) are compositionally biased toward low complexity. A phosphoserine mark is found at serine 275 and serine 276. The segment covering 295 to 313 (RLKDGPLRPQNSEEEKTGS) has biased composition (basic and acidic residues). 3 consecutive transmembrane segments (helical) span residues 386-406 (LTAI…GGAV), 417-437 (GWVL…SVLP), and 448-468 (SLLE…IAHL).

It belongs to the ZIP transporter (TC 2.A.5) family. KE4/Catsup subfamily. In terms of assembly, homodimer. In terms of processing, methylation at some His residue by METTL9 leads to reduced zinc-binding. Post-translationally, rapidly phosphorylated by CK2 following Zn(2+) treatment. This phosphorylation is required for efficient cytosolic Zn(2+) release.

Its subcellular location is the endoplasmic reticulum membrane. It is found in the golgi apparatus. It localises to the cis-Golgi network membrane. It carries out the reaction Zn(2+)(in) = Zn(2+)(out). Functionally, transports Zn(2+) from the endoplasmic reticulum (ER)/Golgi apparatus to the cytosol, playing an essential role in the regulation of cytosolic zinc levels. Acts as a gatekeeper of zinc release from intracellular stores, requiring post-translational activation by phosphorylation, resulting in activation of multiple downstream pathways leading to cell growth and proliferation. Has an essential role in B cell development and is required for proper B cell receptor signaling. Plays an important role in maintaining intestinal epithelial homeostasis and skin dermis development by regulating ER function. Controls cell signaling pathways involved in glucose metabolism in skeletal muscle. Has a protective role against ER stress in different biological contexts. Mediates Zn(2+)-induced ferroptosis. The chain is Zinc transporter SLC39A7 from Canis lupus familiaris (Dog).